We begin with the raw amino-acid sequence, 427 residues long: Acetylornithine aminotransferase (427 aa).

A disordered region spans residues 1–23 (MSLQTLIEQATNPPESGSAASSP). Pyridoxal 5'-phosphate contacts are provided by residues 124–125 (GA) and phenylalanine 157. Arginine 160 provides a ligand contact to N(2)-acetyl-L-ornithine. Pyridoxal 5'-phosphate is bound at residue 248 to 251 (DEVQ). An N6-(pyridoxal phosphate)lysine modification is found at lysine 277. Serine 304 is a N(2)-acetyl-L-ornithine binding site. Residue threonine 305 coordinates pyridoxal 5'-phosphate.

The protein belongs to the class-III pyridoxal-phosphate-dependent aminotransferase family. ArgD subfamily. In terms of assembly, homodimer. Pyridoxal 5'-phosphate serves as cofactor.

It is found in the cytoplasm. The enzyme catalyses N(2)-acetyl-L-ornithine + 2-oxoglutarate = N-acetyl-L-glutamate 5-semialdehyde + L-glutamate. Its pathway is amino-acid biosynthesis; L-arginine biosynthesis; N(2)-acetyl-L-ornithine from L-glutamate: step 4/4. The chain is Acetylornithine aminotransferase from Nostoc sp. (strain PCC 7120 / SAG 25.82 / UTEX 2576).